The sequence spans 123 residues: UPF0102 protein PputGB1_4524 (123 aa).

This sequence belongs to the UPF0102 family.

The chain is UPF0102 protein PputGB1_4524 from Pseudomonas putida (strain GB-1).